Consider the following 191-residue polypeptide: Penicillin-binding protein activator LpoB (191 aa).

Residues 1–16 (MKRYLSLALAALVLTG) form the signal peptide. Cys-17 is lipidated: N-palmitoyl cysteine. Cys-17 is lipidated: S-diacylglycerol cysteine.

This sequence belongs to the LpoB family. In terms of assembly, interacts with PBP1b.

The protein localises to the cell outer membrane. Its function is as follows. Regulator of peptidoglycan synthesis that is essential for the function of penicillin-binding protein 1B (PBP1b). This Yersinia pestis (strain D182038) protein is Penicillin-binding protein activator LpoB.